A 341-amino-acid polypeptide reads, in one-letter code: UDP-3-O-acylglucosamine N-acyltransferase (341 aa).

Catalysis depends on His-242, which acts as the Proton acceptor.

It belongs to the transferase hexapeptide repeat family. LpxD subfamily. Homotrimer.

It catalyses the reaction a UDP-3-O-[(3R)-3-hydroxyacyl]-alpha-D-glucosamine + a (3R)-hydroxyacyl-[ACP] = a UDP-2-N,3-O-bis[(3R)-3-hydroxyacyl]-alpha-D-glucosamine + holo-[ACP] + H(+). The protein operates within bacterial outer membrane biogenesis; LPS lipid A biosynthesis. Catalyzes the N-acylation of UDP-3-O-acylglucosamine using 3-hydroxyacyl-ACP as the acyl donor. Is involved in the biosynthesis of lipid A, a phosphorylated glycolipid that anchors the lipopolysaccharide to the outer membrane of the cell. The sequence is that of UDP-3-O-acylglucosamine N-acyltransferase from Haemophilus influenzae (strain 86-028NP).